A 568-amino-acid chain; its full sequence is Urease subunit alpha (568 aa).

The Urease domain occupies 132-568; the sequence is GAIDTHVHYI…LPLAQLYNLF (437 aa). Ni(2+)-binding residues include His-137, His-139, and Lys-219. An N6-carboxylysine modification is found at Lys-219. Residue His-221 coordinates substrate. Positions 248 and 274 each coordinate Ni(2+). The active-site Proton donor is the His-322. Ni(2+) is bound at residue Asp-362.

This sequence belongs to the metallo-dependent hydrolases superfamily. Urease alpha subunit family. Heterotrimer of UreA (gamma), UreB (beta) and UreC (alpha) subunits. Three heterotrimers associate to form the active enzyme. It depends on Ni cation as a cofactor. Carboxylation allows a single lysine to coordinate two nickel ions.

The protein resides in the cytoplasm. The catalysed reaction is urea + 2 H2O + H(+) = hydrogencarbonate + 2 NH4(+). The protein operates within nitrogen metabolism; urea degradation; CO(2) and NH(3) from urea (urease route): step 1/1. This is Urease subunit alpha from Azobacteroides pseudotrichonymphae genomovar. CFP2.